A 48-amino-acid polypeptide reads, in one-letter code: Phospholipase A2 superbin d (48 aa).

3 residues coordinate Ca(2+): Tyr-28, Gly-30, and Gly-32. An intrachain disulfide couples Cys-29 to Cys-45. Residue His-48 is part of the active site.

It depends on Ca(2+) as a cofactor. Expressed by the venom gland.

It is found in the secreted. The enzyme catalyses a 1,2-diacyl-sn-glycero-3-phosphocholine + H2O = a 1-acyl-sn-glycero-3-phosphocholine + a fatty acid + H(+). Snake venom phospholipase A2 (PLA2) that inhibits collagen-induced platelet aggregation. In terms of inhibition of platelet aggregation, superbin d is less potent as superbin a, b, and c. PLA2 catalyzes the calcium-dependent hydrolysis of the 2-acyl groups in 3-sn-phosphoglycerides. The polypeptide is Phospholipase A2 superbin d (Austrelaps superbus (Lowland copperhead snake)).